Reading from the N-terminus, the 310-residue chain is Coproporphyrin III ferrochelatase (310 aa).

Fe-coproporphyrin III is bound by residues tyrosine 13, arginine 30, 46–47, serine 54, and tyrosine 125; that span reads RY. Histidine 183 and glutamate 264 together coordinate Fe(2+).

It belongs to the ferrochelatase family.

It localises to the cytoplasm. It catalyses the reaction Fe-coproporphyrin III + 2 H(+) = coproporphyrin III + Fe(2+). It participates in porphyrin-containing compound metabolism; protoheme biosynthesis. Involved in coproporphyrin-dependent heme b biosynthesis. Catalyzes the insertion of ferrous iron into coproporphyrin III to form Fe-coproporphyrin III. This is Coproporphyrin III ferrochelatase from Geobacillus sp. (strain WCH70).